The following is a 198-amino-acid chain: NAD(P)H dehydrogenase (quinone) (198 aa).

Residues 4–189 form the Flavodoxin-like domain; it reads ILVLYYSMYG…SIARYQGEYV (186 aa). FMN contacts are provided by residues 10–15 and 78–80; these read SMYGHI and TRF. Tyr12 contributes to the NAD(+) binding site. Trp98 contacts substrate. FMN is bound by residues 113–118 and His133; that span reads STGTGG.

This sequence belongs to the WrbA family. FMN serves as cofactor.

The catalysed reaction is a quinone + NADH + H(+) = a quinol + NAD(+). It catalyses the reaction a quinone + NADPH + H(+) = a quinol + NADP(+). In Salmonella paratyphi B (strain ATCC BAA-1250 / SPB7), this protein is NAD(P)H dehydrogenase (quinone).